Consider the following 176-residue polypeptide: Cytochrome b (176 aa).

3 helical membrane passes run 33-53, 77-98, and 113-133; these read FGSL…FLAM, WLLR…YLHI, and WNVG…GYVL. Heme b-binding residues include histidine 83 and histidine 97.

This sequence belongs to the cytochrome b family. As to quaternary structure, the cytochrome bc1 complex contains 11 subunits: 3 respiratory subunits (MT-CYB, CYC1 and UQCRFS1), 2 core proteins (UQCRC1 and UQCRC2) and 6 low-molecular weight proteins (UQCRH/QCR6, UQCRB/QCR7, UQCRQ/QCR8, UQCR10/QCR9, UQCR11/QCR10 and a cleavage product of UQCRFS1). This cytochrome bc1 complex then forms a dimer. Heme b serves as cofactor.

It localises to the mitochondrion inner membrane. Component of the ubiquinol-cytochrome c reductase complex (complex III or cytochrome b-c1 complex) that is part of the mitochondrial respiratory chain. The b-c1 complex mediates electron transfer from ubiquinol to cytochrome c. Contributes to the generation of a proton gradient across the mitochondrial membrane that is then used for ATP synthesis. In Eumops perotis (Western bonneted bat), this protein is Cytochrome b (MT-CYB).